The primary structure comprises 244 residues: tRNA pseudouridine synthase A (244 aa).

Aspartate 52 serves as the catalytic Nucleophile. Residue tyrosine 110 participates in substrate binding.

It belongs to the tRNA pseudouridine synthase TruA family. As to quaternary structure, homodimer.

The enzyme catalyses uridine(38/39/40) in tRNA = pseudouridine(38/39/40) in tRNA. In terms of biological role, formation of pseudouridine at positions 38, 39 and 40 in the anticodon stem and loop of transfer RNAs. This is tRNA pseudouridine synthase A from Brevibacillus brevis (strain 47 / JCM 6285 / NBRC 100599).